A 146-amino-acid chain; its full sequence is Large ribosomal subunit protein uL13 (146 aa).

Belongs to the universal ribosomal protein uL13 family. In terms of assembly, part of the 50S ribosomal subunit.

Its function is as follows. This protein is one of the early assembly proteins of the 50S ribosomal subunit, although it is not seen to bind rRNA by itself. It is important during the early stages of 50S assembly. This is Large ribosomal subunit protein uL13 from Mycoplasma pneumoniae (strain ATCC 29342 / M129 / Subtype 1) (Mycoplasmoides pneumoniae).